Consider the following 196-residue polypeptide: Orotate phosphoribosyltransferase (196 aa).

Residue 117–125 (EDVVTTGLS) coordinates 5-phospho-alpha-D-ribose 1-diphosphate. Orotate-binding residues include threonine 121 and arginine 149.

It belongs to the purine/pyrimidine phosphoribosyltransferase family. PyrE subfamily. As to quaternary structure, homodimer. Mg(2+) serves as cofactor.

The enzyme catalyses orotidine 5'-phosphate + diphosphate = orotate + 5-phospho-alpha-D-ribose 1-diphosphate. Its pathway is pyrimidine metabolism; UMP biosynthesis via de novo pathway; UMP from orotate: step 1/2. In terms of biological role, catalyzes the transfer of a ribosyl phosphate group from 5-phosphoribose 1-diphosphate to orotate, leading to the formation of orotidine monophosphate (OMP). The polypeptide is Orotate phosphoribosyltransferase (Rhizorhabdus wittichii (strain DSM 6014 / CCUG 31198 / JCM 15750 / NBRC 105917 / EY 4224 / RW1) (Sphingomonas wittichii)).